The chain runs to 201 residues: Ribosomal RNA small subunit methyltransferase G (201 aa).

S-adenosyl-L-methionine contacts are provided by residues G71, F76, 120–121 (LE), and R134.

The protein belongs to the methyltransferase superfamily. RNA methyltransferase RsmG family.

It localises to the cytoplasm. It catalyses the reaction guanosine(527) in 16S rRNA + S-adenosyl-L-methionine = N(7)-methylguanosine(527) in 16S rRNA + S-adenosyl-L-homocysteine. In terms of biological role, specifically methylates the N7 position of guanine in position 527 of 16S rRNA. This is Ribosomal RNA small subunit methyltransferase G from Rhodospirillum rubrum (strain ATCC 11170 / ATH 1.1.1 / DSM 467 / LMG 4362 / NCIMB 8255 / S1).